The sequence spans 152 residues: Large ribosomal subunit protein uL30 (152 aa).

This sequence belongs to the universal ribosomal protein uL30 family. In terms of assembly, part of the 50S ribosomal subunit.

This Methanosphaera stadtmanae (strain ATCC 43021 / DSM 3091 / JCM 11832 / MCB-3) protein is Large ribosomal subunit protein uL30.